Consider the following 139-residue polypeptide: NADPH-dependent 7-cyano-7-deazaguanine reductase (139 aa).

Catalysis depends on Cys-34, which acts as the Thioimide intermediate. Catalysis depends on Asp-41, which acts as the Proton donor. Residues 56 to 58 (VEL) and 75 to 76 (HE) contribute to the substrate site.

This sequence belongs to the GTP cyclohydrolase I family. QueF type 1 subfamily.

The protein resides in the cytoplasm. It carries out the reaction 7-aminomethyl-7-carbaguanine + 2 NADP(+) = 7-cyano-7-deazaguanine + 2 NADPH + 3 H(+). The protein operates within tRNA modification; tRNA-queuosine biosynthesis. Its function is as follows. Catalyzes the NADPH-dependent reduction of 7-cyano-7-deazaguanine (preQ0) to 7-aminomethyl-7-deazaguanine (preQ1). This Methylobacillus flagellatus (strain ATCC 51484 / DSM 6875 / VKM B-1610 / KT) protein is NADPH-dependent 7-cyano-7-deazaguanine reductase.